The chain runs to 160 residues: MKPTYRIFNAVVLGSLVLDQATKVLIDRTMDLYQSIPVIDGLFSITYLRNRGAAFSFLADFSYRLPFFILVSVVALGVIAVTFRKLRDDQHLAAAALALIFSGALGNLIDRVRLGEVIDFLDVYWKTYHWPAFNVADSAICVGVALLAVDMIREERRKAP.

Transmembrane regions (helical) follow at residues 63–83 (YRLP…AVTF) and 89–109 (DQHL…GNLI). Active-site residues include D119 and D137. Residues 132-152 (AFNVADSAICVGVALLAVDMI) traverse the membrane as a helical segment.

The protein belongs to the peptidase A8 family.

The protein localises to the cell inner membrane. It carries out the reaction Release of signal peptides from bacterial membrane prolipoproteins. Hydrolyzes -Xaa-Yaa-Zaa-|-(S,diacylglyceryl)Cys-, in which Xaa is hydrophobic (preferably Leu), and Yaa (Ala or Ser) and Zaa (Gly or Ala) have small, neutral side chains.. It participates in protein modification; lipoprotein biosynthesis (signal peptide cleavage). This protein specifically catalyzes the removal of signal peptides from prolipoproteins. This chain is Lipoprotein signal peptidase, found in Geobacter sulfurreducens (strain ATCC 51573 / DSM 12127 / PCA).